The primary structure comprises 148 residues: Deoxyuridine 5'-triphosphate nucleotidohydrolase (148 aa).

Residues 68–70 (RSG), Asn81, 85–87 (TID), and Lys95 each bind substrate.

The protein belongs to the dUTPase family. It depends on Mg(2+) as a cofactor.

It carries out the reaction dUTP + H2O = dUMP + diphosphate + H(+). The protein operates within pyrimidine metabolism; dUMP biosynthesis; dUMP from dCTP (dUTP route): step 2/2. Functionally, this enzyme is involved in nucleotide metabolism: it produces dUMP, the immediate precursor of thymidine nucleotides and it decreases the intracellular concentration of dUTP so that uracil cannot be incorporated into DNA. The protein is Deoxyuridine 5'-triphosphate nucleotidohydrolase of Rickettsia akari (strain Hartford).